The primary structure comprises 217 residues: MRLRKKWWARPEIEASDKFAEEPKELRGKWNKEFNNNNDIHLELGCGRGGFISQLVEKNKDINYVGIDLKDEVIVYAIRKVKEKEEEVKREFKNIKFVTMNIMGIAEVFDKNEISKIYINFCNPWPKERHNKRRLTHTKLLTEYKKFLKPNTEIWFKTDDKELFEDSQEYFKESGFNIEYITYDLHNSDFKENIKTEYETKFETMGMKIMFLKARLL.

Residues Glu43, Asp68, Asn101, and Asn123 each coordinate S-adenosyl-L-methionine. Position 127 (Lys127) interacts with substrate. Residues 129 to 134 (RHNKRR) are interaction with RNA. Substrate contacts are provided by residues Asp159 and 196–199 (TEYE).

This sequence belongs to the class I-like SAM-binding methyltransferase superfamily. TrmB family.

It catalyses the reaction guanosine(46) in tRNA + S-adenosyl-L-methionine = N(7)-methylguanosine(46) in tRNA + S-adenosyl-L-homocysteine. The protein operates within tRNA modification; N(7)-methylguanine-tRNA biosynthesis. Its function is as follows. Catalyzes the formation of N(7)-methylguanine at position 46 (m7G46) in tRNA. The chain is tRNA (guanine-N(7)-)-methyltransferase from Clostridium botulinum (strain Langeland / NCTC 10281 / Type F).